The primary structure comprises 537 residues: MFLLLKPLLSLHDLSLNLLSVMFHGETLKASVDGVGINMSTMWRETRNVFIVPLFKCIVVMCLIISLLVFVESVYMNLVVLYVKLFNRKPEKVYKWEAMQEDMELGHQNYPMVLVQIPMYNEREVFELSIGAACRLTWPSDRLIVQVLDDSTDPAIMELVSMECTKWASKDININYERRENRNGYKAGALKHGMRHSYVKQCQYLAIFDADFQPEPDYLQRAIPFLIHNPEVALVQARWRFVNANTCLMTRMQEMSLNYHFMAEQQSGSTRHAFFGFNGTAGVWRMVAMEEAGGWKDRTTVEDMDLAVRVGLLGWKFIFVNDLEVKSELPSQFKAFRFQQHRWSCGPANLIRKMTMEIIHNKRVKIWKKFYVIYSFFFLRKIVVHFFTYFFYCVILPTSVFLPEVNIPNWSTIYVPSVITLLSAIATPRSFYLVIFWVLFENVMAMHRTKGTLIGLFEGGRVNEWVVTEKLGDTLNTKLLPQNGRLPKRVNLKEMMMGIYILCCACYDFAFGNAFLYLYLFMQATAFLISGVGFVGT.

Residues 50–70 form a helical membrane-spanning segment; that stretch reads FIVPLFKCIVVMCLIISLLVF. Asp150 is an active-site residue. Substrate-binding residues include Asp209 and Asp211. Residue Asp303 is part of the active site. The next 4 membrane-spanning stretches (helical) occupy residues 382–402, 418–438, 494–514, and 515–535; these read IVVH…SVFL, VITL…IFWV, EMMM…FGNA, and FLYL…VGFV.

Belongs to the glycosyltransferase 2 family. Plant cellulose synthase-like A subfamily.

It is found in the golgi apparatus membrane. It catalyses the reaction GDP-mannose + (glucomannan)n = GDP + (glucomannan)n+1.. Functionally, probable mannan synthase which consists of a 4-beta-mannosyltransferase activity on mannan using GDP-mannose. The beta-1,4-mannan product is the backbone for galactomannan synthesis by galactomannan galactosyltransferase. Galactomannan is a noncellulosic polysaccharides of plant cell wall. This is Probable glucomannan 4-beta-mannosyltransferase 15 from Arabidopsis thaliana (Mouse-ear cress).